The chain runs to 383 residues: 8-amino-7-oxononanoate synthase (383 aa).

R23 contacts substrate. Pyridoxal 5'-phosphate is bound at residue G110–F111. Residue H135 coordinates substrate. Pyridoxal 5'-phosphate-binding residues include S181, H209, and T235. K238 is subject to N6-(pyridoxal phosphate)lysine. T351 provides a ligand contact to substrate.

The protein belongs to the class-II pyridoxal-phosphate-dependent aminotransferase family. BioF subfamily. As to quaternary structure, homodimer. Pyridoxal 5'-phosphate is required as a cofactor.

It carries out the reaction 6-carboxyhexanoyl-[ACP] + L-alanine + H(+) = (8S)-8-amino-7-oxononanoate + holo-[ACP] + CO2. The protein operates within cofactor biosynthesis; biotin biosynthesis. Functionally, catalyzes the decarboxylative condensation of pimeloyl-[acyl-carrier protein] and L-alanine to produce 8-amino-7-oxononanoate (AON), [acyl-carrier protein], and carbon dioxide. This is 8-amino-7-oxononanoate synthase from Aliivibrio fischeri (strain ATCC 700601 / ES114) (Vibrio fischeri).